The sequence spans 335 residues: Homeobox protein unc-39 (335 aa).

2 disordered regions span residues 27–56 (FTSS…GGPP) and 269–294 (RRQR…NGGS). Over residues 28–41 (TSSSNSNTSNSSTS) the composition is skewed to low complexity. The segment covering 42 to 53 (PSHISDQFSSSG) has biased composition (polar residues). Residues 225–277 (KDSSRKFLKQFFRNVSEYPTQEQKREISRATGLKIVQISNWFKNRRQRDKSNN) constitute a DNA-binding region (homeobox). Low complexity predominate over residues 276 to 294 (NNSAKCSPPSSSSSTNGGS).

It belongs to the SIX/Sine oculis homeobox family.

The protein resides in the nucleus. In terms of biological role, probable transcription factor required for differentiation and migration of neuronal cells, such as RID and CAN neurons. Specifically, plays a role in the terminal differentiation of RID peptidergic neurons. Also required for CAN neuron axon guidance. The polypeptide is Homeobox protein unc-39 (Caenorhabditis elegans).